The sequence spans 388 residues: Flavin-dependent monooxygenase (388 aa).

Arginine 54 is a binding site for NADPH. Residues aspartate 61, arginine 117, and aspartate 311 each coordinate FAD.

Belongs to the aromatic-ring hydroxylase family. TetX subfamily. In terms of assembly, monomer. Requires FAD as cofactor.

It localises to the cytoplasm. It catalyses the reaction a tetracycline + NADPH + O2 + H(+) = an 11a-hydroxytetracycline + NADP(+) + H2O. The enzyme catalyses tetracycline + NADPH + O2 + H(+) = 11a-hydroxytetracycline + NADP(+) + H2O. It carries out the reaction oxytetracycline + NADPH + O2 + H(+) = 11a-hydroxy-oxytetracycline + NADP(+) + H2O. An FAD-requiring monooxygenase active on some tetracycline antibiotic derivatives, which leads to their inactivation. Hydroxylates carbon 11a of tetracycline and some analogs. Functionally, confers resistance to tetracycline via an oxidoreductase activity; NADPH is more active than NAD. Expression in E.coli leads to breakdown of tetracycline. Confers resistance to doxycycline, chlortetracycline, oxytetracycline and minocycline. The chain is Flavin-dependent monooxygenase from Bacteroides fragilis.